The sequence spans 313 residues: MLEIEKPKIECQHLDDKYGRFVVEPLERGYGITLGNSLRRMLLSSLPGAAVTSVKIEGVLHEFSTIPGVVEDTTDIILNIKSLALKLHSDEPRVIRIEADDEGVVTAGDIITGADVEILNPEQVIATVEKGGRLYMEMTVEKGRGYVSADKNKKEDQPIGIIPVDSLFSPIHKVNYTVENTRVGQITDYDKLTLEVWTDGSIAPDEAVSSAAKILIEHMRLFLGLTERVSDEVTMVEKEEETRDRLMDMSIEELDLSVRSYNCLKRAGINTVAELLQRSEEDMMKVRNLGKKSLEEVTQKLSELGLSLRSSEE.

The segment at 1–226 is alpha N-terminal domain (alpha-NTD); the sequence is MLEIEKPKIE…EHMRLFLGLT (226 aa). The tract at residues 242–313 is alpha C-terminal domain (alpha-CTD); the sequence is TRDRLMDMSI…LGLSLRSSEE (72 aa).

It belongs to the RNA polymerase alpha chain family. Homodimer. The RNAP catalytic core consists of 2 alpha, 1 beta, 1 beta' and 1 omega subunit. When a sigma factor is associated with the core the holoenzyme is formed, which can initiate transcription.

It carries out the reaction RNA(n) + a ribonucleoside 5'-triphosphate = RNA(n+1) + diphosphate. Its function is as follows. DNA-dependent RNA polymerase catalyzes the transcription of DNA into RNA using the four ribonucleoside triphosphates as substrates. This is DNA-directed RNA polymerase subunit alpha from Moorella thermoacetica (strain ATCC 39073 / JCM 9320).